A 509-amino-acid chain; its full sequence is ESX-2 secretion system protein eccD2 (509 aa).

11 helical membrane-spanning segments follow: residues 135-155 (LTAA…VLAL), 170-190 (AMAG…WWGW), 196-216 (LFSG…ACAP), 222-242 (AAHA…IGVA), 248-268 (QTAV…VAAV), 281-301 (ICVL…ALWV), 364-384 (VQVG…WGVL), 389-409 (PWAW…ITQG), 418-438 (AVAL…KYAL), 449-469 (LWPA…ALVV), and 487-507 (VLAM…FAWL).

The protein belongs to the EccD/Snm4 family. Part of the ESX-2 / type VII secretion system (T7SS), which is composed of cytosolic and membrane components.

It localises to the cell membrane. The polypeptide is ESX-2 secretion system protein eccD2 (eccD2) (Mycobacterium tuberculosis (strain CDC 1551 / Oshkosh)).